Here is a 255-residue protein sequence, read N- to C-terminus: Tryptophan synthase alpha chain (255 aa).

Residues glutamate 51 and aspartate 62 each act as proton acceptor in the active site.

It belongs to the TrpA family. In terms of assembly, tetramer of two alpha and two beta chains.

It carries out the reaction (1S,2R)-1-C-(indol-3-yl)glycerol 3-phosphate + L-serine = D-glyceraldehyde 3-phosphate + L-tryptophan + H2O. The protein operates within amino-acid biosynthesis; L-tryptophan biosynthesis; L-tryptophan from chorismate: step 5/5. Functionally, the alpha subunit is responsible for the aldol cleavage of indoleglycerol phosphate to indole and glyceraldehyde 3-phosphate. The chain is Tryptophan synthase alpha chain from Maridesulfovibrio salexigens (strain ATCC 14822 / DSM 2638 / NCIMB 8403 / VKM B-1763) (Desulfovibrio salexigens).